Consider the following 363-residue polypeptide: Mitogen-activated protein kinase 4 (363 aa).

The Protein kinase domain occupies 30–318 (YDLVKVVGFG…AKQVMEHPYF (289 aa)). ATP is bound by residues 36 to 44 (VGFGACGTV) and Lys59. Asp156 serves as the catalytic Proton acceptor. A phosphoserine mark is found at Ser186 and Ser187. At Thr190 the chain carries Phosphothreonine; by MKK5. The TQY motif lies at 190–192 (TQY). The residue at position 192 (Tyr192) is a Phosphotyrosine; by MKK5.

This sequence belongs to the protein kinase superfamily. CMGC Ser/Thr protein kinase family. MAP kinase subfamily. Mg(2+) is required as a cofactor. Dually phosphorylated on Thr-190 and Tyr-192, which activates the enzyme.

The enzyme catalyses L-seryl-[protein] + ATP = O-phospho-L-seryl-[protein] + ADP + H(+). It carries out the reaction L-threonyl-[protein] + ATP = O-phospho-L-threonyl-[protein] + ADP + H(+). Its function is as follows. Essential for the two main proliferating life stages, the promastigotes and amastigotes, of the parasite. This chain is Mitogen-activated protein kinase 4, found in Leishmania mexicana.